The chain runs to 311 residues: 2-phospho-L-lactate transferase (311 aa).

Residues aspartate 52 and arginine 91 each coordinate 7,8-didemethyl-8-hydroxy-5-deazariboflavin.

This sequence belongs to the CofD family. As to quaternary structure, homodimer. Mg(2+) is required as a cofactor.

It catalyses the reaction (2S)-lactyl-2-diphospho-5'-guanosine + 7,8-didemethyl-8-hydroxy-5-deazariboflavin = oxidized coenzyme F420-0 + GMP + H(+). Its pathway is cofactor biosynthesis; coenzyme F420 biosynthesis. Inhibited by EDTA in vitro. Functionally, catalyzes the transfer of the 2-phospholactate moiety from (2S)-lactyl-2-diphospho-5'-guanosine to 7,8-didemethyl-8-hydroxy-5-deazariboflavin (FO) with the formation of oxidized coenzyme F420-0 and GMP. The polypeptide is 2-phospho-L-lactate transferase (Methanocaldococcus jannaschii (strain ATCC 43067 / DSM 2661 / JAL-1 / JCM 10045 / NBRC 100440) (Methanococcus jannaschii)).